The following is a 1207-amino-acid chain: DNA-directed RNA polymerase subunit beta' (1207 aa).

Cys-60, Cys-62, Cys-75, and Cys-78 together coordinate Zn(2+). Mg(2+) contacts are provided by Asp-449, Asp-451, and Asp-453. Zn(2+)-binding residues include Cys-822, Cys-896, Cys-903, and Cys-906.

The protein belongs to the RNA polymerase beta' chain family. As to quaternary structure, the RNAP catalytic core consists of 2 alpha, 1 beta, 1 beta' and 1 omega subunit. When a sigma factor is associated with the core the holoenzyme is formed, which can initiate transcription. Mg(2+) serves as cofactor. Zn(2+) is required as a cofactor.

The catalysed reaction is RNA(n) + a ribonucleoside 5'-triphosphate = RNA(n+1) + diphosphate. Its function is as follows. DNA-dependent RNA polymerase catalyzes the transcription of DNA into RNA using the four ribonucleoside triphosphates as substrates. This is DNA-directed RNA polymerase subunit beta' from Staphylococcus aureus (strain USA300).